Here is a 359-residue protein sequence, read N- to C-terminus: MKPALRLQLDRYVRRLAELDSLLADPAVMRDAGGFRALSREHVEVSGIVERQRRHAQRERDLAAAAEMASDPELAAMAAEEAASAQAELDRLATELQRLLLPRDPDDARSVFLEIRAGTGGDESALFAGDLLRMYTRYAERKGWRVELLSASDSELGGYKEVVARIEGDAVFGHLKYESGGHRVQRVPATETQGRIHTSACTVAVLAEPDEAQEVTLNPADLRIDTYRASGAGGQHVNKTDSAVRITHLPTGLVAECQDDRSQHRNKAKAMAVLAARLRDKDRLERQAREAATRKSLIGSGDRSDRIRTYNFPQGRLTDHRINLTLYQLGAIMDGDLDPVVKALVAAREAELLAELEIG.

Gln-235 is subject to N5-methylglutamine.

This sequence belongs to the prokaryotic/mitochondrial release factor family. Post-translationally, methylated by PrmC. Methylation increases the termination efficiency of RF1.

The protein resides in the cytoplasm. Peptide chain release factor 1 directs the termination of translation in response to the peptide chain termination codons UAG and UAA. In Methylibium petroleiphilum (strain ATCC BAA-1232 / LMG 22953 / PM1), this protein is Peptide chain release factor 1.